Reading from the N-terminus, the 2948-residue chain is Transforming acidic coiled-coil-containing protein 2 (2948 aa).

Residues methionine 1 to asparagine 30 show a composition bias toward polar residues. 15 disordered regions span residues methionine 1 to leucine 304, arginine 314 to cysteine 333, alanine 392 to serine 453, leucine 465 to glutamate 785, serine 825 to proline 964, cysteine 985 to serine 1050, alanine 1062 to threonine 1154, alanine 1243 to proline 1274, glutamine 1296 to alanine 1400, proline 1427 to leucine 1463, alanine 1493 to arginine 1661, leucine 1675 to alanine 1705, valine 1741 to threonine 1878, histidine 1907 to threonine 2035, and leucine 2052 to proline 2460. Positions glycine 174–glutamine 184 are enriched in basic and acidic residues. Serine 197, serine 201, and serine 269 each carry phosphoserine. Valine 325 is subject to Phosphothreonine. Phosphoserine is present on serine 493. The span at glutamate 496–histidine 507 shows a compositional bias: basic and acidic residues. A phosphoserine mark is found at serine 561, serine 571, and serine 575. Positions serine 604–serine 629 are enriched in basic and acidic residues. Position 758 is a phosphoserine (serine 758). Residues serine 911–serine 926 are compositionally biased toward low complexity. Serine 962 carries the phosphoserine modification. Residues cysteine 985–alanine 996 are compositionally biased toward polar residues. Serine 1025 carries the post-translational modification Phosphoserine. Residues serine 1267 and serine 1313 each carry the phosphoserine modification. Low complexity predominate over residues alanine 1348–alanine 1357. Polar residues predominate over residues aspartate 1383 to alanine 1400. Serine 1562 carries the post-translational modification Phosphoserine. 2 stretches are compositionally biased toward basic and acidic residues: residues aspartate 1801–proline 1823 and proline 1834–glutamate 1854. Residues alanine 1862–aspartate 1873 are compositionally biased toward low complexity. Over residues proline 1939 to aspartate 1948 the composition is skewed to basic and acidic residues. Over residues lysine 1963–isoleucine 1976 the composition is skewed to pro residues. Residue serine 2072 is modified to Phosphoserine. A compositionally biased stretch (polar residues) spans aspartate 2074–asparagine 2102. The span at serine 2114–leucine 2124 shows a compositional bias: low complexity. A compositionally biased stretch (basic residues) spans lysine 2125 to threonine 2141. A phosphoserine mark is found at serine 2161 and serine 2226. Residue threonine 2246 is modified to Phosphothreonine. Serine 2256 is subject to Phosphoserine. A compositionally biased stretch (basic and acidic residues) spans leucine 2265 to serine 2275. The segment covering lysine 2288–lysine 2305 has biased composition (basic residues). An SPAZ domain is found at proline 2315–serine 2403. A phosphoserine mark is found at serine 2317, serine 2321, serine 2359, serine 2389, serine 2392, serine 2394, and serine 2403. Polar residues predominate over residues asparagine 2348–asparagine 2368. Residues lysine 2382–proline 2395 are compositionally biased toward low complexity. Residues threonine 2430, threonine 2451, threonine 2455, and threonine 2458 each carry the phosphothreonine modification. Serine 2512 and serine 2534 each carry phosphoserine. The residue at position 2553 (threonine 2553) is a Phosphothreonine. A disordered region spans residues glutamine 2555–serine 2577. A phosphoserine mark is found at serine 2557 and serine 2569. The span at glutamate 2568–serine 2577 shows a compositional bias: polar residues. Threonine 2625 bears the Phosphothreonine mark. Coiled-coil stretches lie at residues alanine 2675–arginine 2703 and aspartate 2746–lysine 2947.

The protein belongs to the TACC family. Interacts with CCDC100/CEP120. Interacts with microtubules. Interacts with YEATS4, GCN5L2 and PCAF. In terms of processing, phosphorylated by TTK; which is required for localization in centrosome. As to expression, strongly expressed in heart, skeletal muscle, brain, prostate, thyroid and trachea.

The protein resides in the cytoplasm. The protein localises to the nucleus. It localises to the cytoskeleton. It is found in the microtubule organizing center. Its subcellular location is the centrosome. In terms of biological role, plays a role in the microtubule-dependent coupling of the nucleus and the centrosome. Involved in the processes that regulate centrosome-mediated interkinetic nuclear migration (INM) of neural progenitors. May play a role in organizing centrosomal microtubules. May act as a tumor suppressor protein. May represent a tumor progression marker. In Homo sapiens (Human), this protein is Transforming acidic coiled-coil-containing protein 2 (TACC2).